The primary structure comprises 433 residues: Monodehydroascorbate reductase (433 aa).

FAD is bound by residues 12–15, Glu-39, Arg-46, Lys-51, Ile-94, and 145–146; these read GGVS and RE. NAD(+) contacts are provided by residues 170–176, Glu-194, Arg-200, and Gly-259; that span reads GGYIGLE. 172–176 is a binding site for NADP(+); the sequence is YIGLE. Positions 200 and 259 each coordinate NADP(+). Residue Asp-296 coordinates FAD. 312–313 serves as a coordination point for NAD(+); that stretch reads EH. Residue 312–313 coordinates NADP(+); that stretch reads EH. Residue Val-314 coordinates FAD. Arg-318 provides a ligand contact to L-ascorbate. Tyr-347 is an FAD binding site. Tyr-347 contributes to the NAD(+) binding site. NADP(+) is bound at residue Tyr-347. Arg-349 lines the L-ascorbate pocket.

The protein belongs to the FAD-dependent oxidoreductase family. FAD is required as a cofactor. In terms of tissue distribution, expressed at relatively low levels in all tissues examined.

The protein localises to the cytoplasm. It carries out the reaction 2 monodehydro-L-ascorbate radical + NADH + H(+) = 2 L-ascorbate + NAD(+). In terms of biological role, catalyzes the conversion of monodehydroascorbate to ascorbate, oxidizing NADH in the process. This Pisum sativum (Garden pea) protein is Monodehydroascorbate reductase.